The primary structure comprises 203 residues: Thymidine kinase (203 aa).

Residues 21-28 and 99-102 contribute to the ATP site; these read GCMFAGKT and DEIQ. Glutamate 100 acts as the Proton acceptor in catalysis. Zn(2+) is bound by residues cysteine 156, cysteine 159, cysteine 194, and cysteine 197.

The protein belongs to the thymidine kinase family. As to quaternary structure, homotetramer.

It localises to the cytoplasm. The catalysed reaction is thymidine + ATP = dTMP + ADP + H(+). The polypeptide is Thymidine kinase (Mesoplasma florum (strain ATCC 33453 / NBRC 100688 / NCTC 11704 / L1) (Acholeplasma florum)).